A 533-amino-acid polypeptide reads, in one-letter code: NAD(P)H-quinone oxidoreductase chain 4 1 (533 aa).

A run of 14 helical transmembrane segments spans residues 6–26 (FPWL…IPLI), 37–57 (YSLF…WQHF), 87–107 (LSMP…LASW), 113–133 (PKLF…VFTA), 137–157 (MLFF…ISIW), 169–189 (FILY…ALAF), 209–229 (WLEL…LSIF), 243–263 (NAPG…YALI), 277–297 (FAPV…LNAF), 311–331 (ISHM…GLNG), 332–352 (ALLQ…LAGV), 376–396 (FALF…SGFV), 417–437 (VTIL…LSML), and 461–481 (LFVA…PKLT).

This sequence belongs to the complex I subunit 4 family.

It localises to the cellular thylakoid membrane. It catalyses the reaction a plastoquinone + NADH + (n+1) H(+)(in) = a plastoquinol + NAD(+) + n H(+)(out). The enzyme catalyses a plastoquinone + NADPH + (n+1) H(+)(in) = a plastoquinol + NADP(+) + n H(+)(out). In terms of biological role, NDH-1 shuttles electrons from NAD(P)H, via FMN and iron-sulfur (Fe-S) centers, to quinones in the respiratory chain. The immediate electron acceptor for the enzyme in this species is believed to be plastoquinone. Couples the redox reaction to proton translocation (for every two electrons transferred, four hydrogen ions are translocated across the cytoplasmic membrane), and thus conserves the redox energy in a proton gradient. This is NAD(P)H-quinone oxidoreductase chain 4 1 from Synechococcus elongatus (strain ATCC 33912 / PCC 7942 / FACHB-805) (Anacystis nidulans R2).